Here is a 597-residue protein sequence, read N- to C-terminus: DNA ligase (597 aa).

An ATP-binding site is contributed by glutamate 262. Lysine 264 acts as the N6-AMP-lysine intermediate in catalysis. The ATP site is built by arginine 269, arginine 284, glutamate 314, phenylalanine 354, arginine 431, and lysine 437.

Belongs to the ATP-dependent DNA ligase family. The cofactor is Mg(2+). It depends on Mn(2+) as a cofactor.

The enzyme catalyses ATP + (deoxyribonucleotide)n-3'-hydroxyl + 5'-phospho-(deoxyribonucleotide)m = (deoxyribonucleotide)n+m + AMP + diphosphate.. It carries out the reaction ADP + (deoxyribonucleotide)n-3'-hydroxyl + 5'-phospho-(deoxyribonucleotide)m = (deoxyribonucleotide)n+m + AMP + phosphate.. It catalyses the reaction GTP + (deoxyribonucleotide)n-3'-hydroxyl + 5'-phospho-(deoxyribonucleotide)m = (deoxyribonucleotide)n+m + GMP + diphosphate.. Inhibited by Ca(2+) and Zn(2+). DNA ligase that seals nicks in double-stranded DNA during DNA replication, DNA recombination and DNA repair. Can use both ATP and ADP. This is DNA ligase from Staphylothermus marinus (strain ATCC 43588 / DSM 3639 / JCM 9404 / F1).